A 421-amino-acid chain; its full sequence is Gamma-glutamyl phosphate reductase (421 aa).

Belongs to the gamma-glutamyl phosphate reductase family.

Its subcellular location is the cytoplasm. The enzyme catalyses L-glutamate 5-semialdehyde + phosphate + NADP(+) = L-glutamyl 5-phosphate + NADPH + H(+). Its pathway is amino-acid biosynthesis; L-proline biosynthesis; L-glutamate 5-semialdehyde from L-glutamate: step 2/2. In terms of biological role, catalyzes the NADPH-dependent reduction of L-glutamate 5-phosphate into L-glutamate 5-semialdehyde and phosphate. The product spontaneously undergoes cyclization to form 1-pyrroline-5-carboxylate. This Acinetobacter baumannii (strain SDF) protein is Gamma-glutamyl phosphate reductase.